A 325-amino-acid polypeptide reads, in one-letter code: Elongation factor P--(R)-beta-lysine ligase (325 aa).

76–78 is a binding site for substrate; that stretch reads SPE. ATP-binding positions include 100-102 and Asn-109; that span reads RNE. Tyr-118 contributes to the substrate binding site. Residue 244-245 coordinates ATP; sequence EL. Glu-251 contributes to the substrate binding site. Gly-300 contributes to the ATP binding site.

It belongs to the class-II aminoacyl-tRNA synthetase family. EpmA subfamily. Homodimer.

It carries out the reaction D-beta-lysine + L-lysyl-[protein] + ATP = N(6)-((3R)-3,6-diaminohexanoyl)-L-lysyl-[protein] + AMP + diphosphate + H(+). With EpmB is involved in the beta-lysylation step of the post-translational modification of translation elongation factor P (EF-P). Catalyzes the ATP-dependent activation of (R)-beta-lysine produced by EpmB, forming a lysyl-adenylate, from which the beta-lysyl moiety is then transferred to the epsilon-amino group of a conserved specific lysine residue in EF-P. In Proteus mirabilis (strain HI4320), this protein is Elongation factor P--(R)-beta-lysine ligase.